A 104-amino-acid chain; its full sequence is Large ribosomal subunit protein uL24 (104 aa).

It belongs to the universal ribosomal protein uL24 family. As to quaternary structure, part of the 50S ribosomal subunit.

In terms of biological role, one of two assembly initiator proteins, it binds directly to the 5'-end of the 23S rRNA, where it nucleates assembly of the 50S subunit. One of the proteins that surrounds the polypeptide exit tunnel on the outside of the subunit. The protein is Large ribosomal subunit protein uL24 of Pseudoalteromonas atlantica (strain T6c / ATCC BAA-1087).